Reading from the N-terminus, the 376-residue chain is Lipoyl synthase, mitochondrial (376 aa).

[4Fe-4S] cluster contacts are provided by C103, C108, C114, C134, C138, C141, and S349. The Radical SAM core domain occupies 119–338 (EHGTQTATIM…EDRGNQLGFL (220 aa)).

It belongs to the radical SAM superfamily. Lipoyl synthase family. It depends on [4Fe-4S] cluster as a cofactor.

It localises to the mitochondrion. It carries out the reaction [[Fe-S] cluster scaffold protein carrying a second [4Fe-4S](2+) cluster] + N(6)-octanoyl-L-lysyl-[protein] + 2 oxidized [2Fe-2S]-[ferredoxin] + 2 S-adenosyl-L-methionine + 4 H(+) = [[Fe-S] cluster scaffold protein] + N(6)-[(R)-dihydrolipoyl]-L-lysyl-[protein] + 4 Fe(3+) + 2 hydrogen sulfide + 2 5'-deoxyadenosine + 2 L-methionine + 2 reduced [2Fe-2S]-[ferredoxin]. It functions in the pathway protein modification; protein lipoylation via endogenous pathway; protein N(6)-(lipoyl)lysine from octanoyl-[acyl-carrier-protein]: step 2/2. Functionally, catalyzes the radical-mediated insertion of two sulfur atoms into the C-6 and C-8 positions of the octanoyl moiety bound to the lipoyl domains of lipoate-dependent enzymes, thereby converting the octanoylated domains into lipoylated derivatives. The polypeptide is Lipoyl synthase, mitochondrial (Drosophila ananassae (Fruit fly)).